Consider the following 302-residue polypeptide: uncharacterized protein (302 aa).

Disordered stretches follow at residues 15 to 34 (RHST…RFHK), 143 to 195 (GMPL…PSHL), and 221 to 246 (GSEA…RESV). Positions 172 to 189 (HSDENKATGQGRENRDQP) are enriched in basic and acidic residues.

This is an uncharacterized protein from Homo sapiens (Human).